The chain runs to 39 residues: Cytochrome b559 subunit beta (39 aa).

The chain crosses the membrane as a helical span at residues 14 to 30; sequence WLAVHGLAVPTVFFLGS. H18 is a heme binding site.

It belongs to the PsbE/PsbF family. As to quaternary structure, heterodimer of an alpha subunit and a beta subunit. PSII is composed of 1 copy each of membrane proteins PsbA, PsbB, PsbC, PsbD, PsbE, PsbF, PsbH, PsbI, PsbJ, PsbK, PsbL, PsbM, PsbT, PsbX, PsbY, PsbZ, Psb30/Ycf12, at least 3 peripheral proteins of the oxygen-evolving complex and a large number of cofactors. It forms dimeric complexes. It depends on heme b as a cofactor.

It localises to the plastid. Its subcellular location is the chloroplast thylakoid membrane. Its function is as follows. This b-type cytochrome is tightly associated with the reaction center of photosystem II (PSII). PSII is a light-driven water:plastoquinone oxidoreductase that uses light energy to abstract electrons from H(2)O, generating O(2) and a proton gradient subsequently used for ATP formation. It consists of a core antenna complex that captures photons, and an electron transfer chain that converts photonic excitation into a charge separation. In Gnetum gnemon (Spanish joint-fir), this protein is Cytochrome b559 subunit beta.